The primary structure comprises 359 residues: MAKLTALTLLGLGLALFDGQKSSFQTRFNVHREVTPVELPNCNLVKGIDNGSEDLEILPNGLAFISAGLKYPGIMSFDPDKPGKILLMDLNEKDPVVLELSITGSTFDLSSFNPHGISTFTDEDNIVYLMVVNHPDSKSTVELFKFQEKEKSLLHLKTIRHKLLPSVNDIVAVGPEHFYATNDHYFIDPYLKSWEMHLGLAWSFVTYYSPNDVRVVAEGFDFANGINISPDGKYVYIAELLAHKIHVYEKHANWTLTPLKSLDFNTLVDNISVDPVTGDLWVGCHPNGMRIFYYDPKNPPASEVLRIQDILSKEPKVTVAYAENGTVLQGSTVAAVYKGKMLVGTVFHKALYCELSQAN.

The cysteines at positions 42 and 353 are disulfide-linked. A glycan (N-linked (GlcNAc...) asparagine) is linked at Asn-50. The Ca(2+) site is built by Glu-53 and Asp-54. His-115 acts as the Proton acceptor in catalysis. Residues Ile-117, Asn-168, Asp-169, and Asn-224 each contribute to the Ca(2+) site. N-linked (GlcNAc...) asparagine glycosylation occurs at Asn-253. The Ca(2+) site is built by Asp-269 and Asn-270. Asn-270 and Asn-324 each carry an N-linked (GlcNAc...) asparagine glycan.

Belongs to the paraoxonase family. As to quaternary structure, homodimer. Interacts with CLU. It depends on Ca(2+) as a cofactor. Glycosylated. In terms of processing, the signal sequence is not cleaved. As to expression, plasma. Associated with HDL.

The protein resides in the secreted. It is found in the extracellular space. The enzyme catalyses a phenyl acetate + H2O = a phenol + acetate + H(+). The catalysed reaction is An aryl dialkyl phosphate + H2O = dialkyl phosphate + an aryl alcohol.. It catalyses the reaction an N-acyl-L-homoserine lactone + H2O = an N-acyl-L-homoserine + H(+). In terms of biological role, hydrolyzes the toxic metabolites of a variety of organophosphorus insecticides. Capable of hydrolyzing a broad spectrum of organophosphate substrates and lactones, and a number of aromatic carboxylic acid esters. Mediates an enzymatic protection of low density lipoproteins against oxidative modification. The chain is Serum paraoxonase/arylesterase 1 (PON1) from Oryctolagus cuniculus (Rabbit).